Consider the following 421-residue polypeptide: Functional amyloid transporter FapF (421 aa).

The first 24 residues, 1 to 24 (MTQTLSLRAVLCATTLVSPFLAQA), serve as a signal peptide directing secretion. A coiled-coil region spans residues 23-64 (QAATESEVEALKKELLELRQRYEAQQNALMVLEQRVRQVEAQ).

This sequence belongs to the amyloid transporter (TC 9.B.153) family.

It is found in the secreted. The protein localises to the cell surface. Its subcellular location is the cell outer membrane. Its function is as follows. Transports fibril components across the outer membrane. Upon overexpression of the endogenous six-gene locus (fapA-fapF), cells form large clumps during liquid growth, make large amounts of biofilm and produce amyloid fibrils. The protein is Functional amyloid transporter FapF of Pseudomonas aeruginosa (strain ATCC 15692 / DSM 22644 / CIP 104116 / JCM 14847 / LMG 12228 / 1C / PRS 101 / PAO1).